Here is a 245-residue protein sequence, read N- to C-terminus: Phycocyanobilin:ferredoxin oxidoreductase (245 aa).

It belongs to the HY2 family.

It carries out the reaction (2R,3Z)-phycocyanobilin + 4 oxidized [2Fe-2S]-[ferredoxin] = biliverdin IXalpha + 4 reduced [2Fe-2S]-[ferredoxin] + 4 H(+). Its function is as follows. Catalyzes the four-electron reduction of biliverdin IX-alpha (2-electron reduction at both the A and D rings); the reaction proceeds via an isolatable 2-electron intermediate, 181,182-dihydrobiliverdin. The protein is Phycocyanobilin:ferredoxin oxidoreductase of Microcystis aeruginosa (strain NIES-843 / IAM M-2473).